Here is a 503-residue protein sequence, read N- to C-terminus: D-xylose-proton symporter-like 2 (503 aa).

The segment covering 1-15 has biased composition (polar residues); the sequence is MALDPEQQQPISSVS. The segment at 1–32 is disordered; sequence MALDPEQQQPISSVSREFGKSSGEISPEREPL. Alanine 2 is modified (N-acetylalanine). A Phosphoserine modification is found at serine 26. Transmembrane regions (helical) follow at residues 42 to 62, 99 to 119, 124 to 144, 146 to 166, 187 to 207, 213 to 233, 305 to 325, 346 to 366, 375 to 395, 400 to 420, 437 to 457, and 467 to 487; these read YSVV…LLYG, GSLY…DVIG, LILA…APTY, VLII…HAAP, FFIV…VNVH, MYAT…WLPA, ALII…PSVL, VSIL…VVID, LGGV…YLFF, VVAV…FGPI, GLSL…FAFS, and ILFC…FFIV.

The protein belongs to the major facilitator superfamily. Sugar transporter (TC 2.A.1.1) family.

The protein resides in the membrane. The protein is D-xylose-proton symporter-like 2 of Arabidopsis thaliana (Mouse-ear cress).